The following is a 344-amino-acid chain: MARIIALDGAQGEGGGQILRSALSLSMITGQPFEMSGIRAGRAKPGLLRQHLTAVRAATEICGAQVNGDELGSQQLRFTPGPIRGGEYRFAIGSAGSCMLVLQTVLPALWFADGSSRVEVHGGTHNQAAPSADFICRVWEPLLARMGISQRTTLIKHGFYPAGGGAAATVVEPATSLRGLTLISRGETLRTTAEALLAAVPYHVGEREVATLEAHFPQAEKNVVALEGGCGPGNALSLMIQSEQLTELFVAFGVKGTSAEAVANQVAHEARRYLASPAAVGEHLADQLILPLALAGEGAFTVARASAHLLTNIAVVERFLPVTFNLEEARGMVQVMVSKKDSGS.

ATP is bound by residues Q103 and 283 to 287; that span reads HLADQ. The active-site Tele-AMP-histidine intermediate is H308.

Belongs to the RNA 3'-terminal cyclase family. Type 1 subfamily.

The protein localises to the cytoplasm. It catalyses the reaction a 3'-end 3'-phospho-ribonucleotide-RNA + ATP = a 3'-end 2',3'-cyclophospho-ribonucleotide-RNA + AMP + diphosphate. Functionally, catalyzes the conversion of 3'-phosphate to a 2',3'-cyclic phosphodiester at the end of RNA. The mechanism of action of the enzyme occurs in 3 steps: (A) adenylation of the enzyme by ATP; (B) transfer of adenylate to an RNA-N3'P to produce RNA-N3'PP5'A; (C) and attack of the adjacent 2'-hydroxyl on the 3'-phosphorus in the diester linkage to produce the cyclic end product. The biological role of this enzyme is unknown but it is likely to function in some aspects of cellular RNA processing. This chain is RNA 3'-terminal phosphate cyclase, found in Salmonella paratyphi C (strain RKS4594).